The chain runs to 611 residues: Fatty acid photodecarboxylase, chloroplastic (611 aa).

The disordered stretch occupies residues 1-22 (MMLGPKTVTRGATKGAAPRSMA). A chloroplast-targeting transit peptide spans 1-36 (MMLGPKTVTRGATKGAAPRSMAARRVGGARRLSVRA). Residues 55-56 (TA), E76, M125, S129, and 133-136 (NATL) contribute to the FAD site. Hexadecanoate is bound by residues C392, R412, Y427, and Q447. Position 582 (G582) interacts with FAD.

The protein belongs to the GMC oxidoreductase family. It depends on FAD as a cofactor.

The protein localises to the plastid. The protein resides in the chloroplast. It catalyses the reaction a long-chain fatty acid + hnu + H(+) = a long-chain alkane + CO2. It carries out the reaction hnu + hexadecanoate + H(+) = pentadecane + CO2. Activated by blue light and repressed by red light. Functionally, catalyzes the decarboxylation of free fatty acids to n-alkanes or n-alkenes in response to blue light. Substrate preference is toward fatty acids with C17 or C18 chains. Saturated fatty acids are converted to alkanes, not alkenes. The decarboxylation is initiated through electron abstraction from the fatty acid by the photo-excited FAD. The chain is Fatty acid photodecarboxylase, chloroplastic from Chlamydomonas reinhardtii (Chlamydomonas smithii).